Here is an 808-residue protein sequence, read N- to C-terminus: Anaphase-promoting complex subunit 4 (808 aa).

The residue at position 469 (Tyr-469) is a Phosphotyrosine. Ser-757 and Ser-758 each carry phosphoserine. Lys-772 is covalently cross-linked (Glycyl lysine isopeptide (Lys-Gly) (interchain with G-Cter in SUMO2)). Residues Ser-777 and Ser-779 each carry the phosphoserine modification. Residue Lys-798 forms a Glycyl lysine isopeptide (Lys-Gly) (interchain with G-Cter in SUMO2) linkage.

Belongs to the APC4 family. In terms of assembly, the mammalian APC/C is composed at least of 14 distinct subunits ANAPC1, ANAPC2, CDC27/APC3, ANAPC4, ANAPC5, CDC16/APC6, ANAPC7, CDC23/APC8, ANAPC10, ANAPC11, CDC26/APC12, ANAPC13, ANAPC15 and ANAPC16 that assemble into a complex of at least 19 chains with a combined molecular mass of around 1.2 MDa; APC/C interacts with FZR1 and FBXO5. In the context of the APC/C complex, directly interacts with UBE2S. Interacts with FBXO43.

The protein resides in the nucleus. It participates in protein modification; protein ubiquitination. Functionally, component of the anaphase promoting complex/cyclosome (APC/C), a cell cycle-regulated E3 ubiquitin ligase that controls progression through mitosis and the G1 phase of the cell cycle. The APC/C complex acts by mediating ubiquitination and subsequent degradation of target proteins: it mainly mediates the formation of 'Lys-11'-linked polyubiquitin chains and, to a lower extent, the formation of 'Lys-48'- and 'Lys-63'-linked polyubiquitin chains. The APC/C complex catalyzes assembly of branched 'Lys-11'-/'Lys-48'-linked branched ubiquitin chains on target proteins. In Homo sapiens (Human), this protein is Anaphase-promoting complex subunit 4 (ANAPC4).